Here is a 344-residue protein sequence, read N- to C-terminus: Arginase 2, chloroplastic/mitochondrial (344 aa).

A chloroplast and mitochondrion-targeting transit peptide spans 1 to 26 (MWKIGQRGVPYFQRLIAAPFTTLRSL). Mn(2+) is bound by residues histidine 163, aspartate 187, histidine 189, and aspartate 191. Substrate contacts are provided by residues 189–193 (HPDIY), 197–199 (EGN), and asparagine 228. 2 residues coordinate Mn(2+): aspartate 272 and aspartate 274. A substrate-binding site is contributed by glutamate 315.

The protein belongs to the arginase family. Mn(2+) serves as cofactor. In terms of tissue distribution, expressed in vasculature of roots, root tips, leaves and cotyledons.

It is found in the mitochondrion. The protein localises to the plastid. Its subcellular location is the chloroplast. It carries out the reaction L-arginine + H2O = urea + L-ornithine. The enzyme catalyses agmatine + H2O = urea + putrescine. It functions in the pathway nitrogen metabolism; urea cycle; L-ornithine and urea from L-arginine: step 1/1. The protein operates within amine and polyamine biosynthesis; putrescine biosynthesis via agmatine pathway; putrescine from agmatine: step 1/1. Functionally, catalyzes the hydrolysis of L-arginine to urea and L-ornithine. The latter can be utilized in the urea cycle or as a precursor for the synthesis of both polyamines and proline. Possesses agmatinase activity. Catalyzes the formation of putrescine from agmatine. The polypeptide is Arginase 2, chloroplastic/mitochondrial (ARGAH2) (Arabidopsis thaliana (Mouse-ear cress)).